The chain runs to 199 residues: 3-isopropylmalate dehydratase small subunit (199 aa).

Belongs to the LeuD family. LeuD type 1 subfamily. As to quaternary structure, heterodimer of LeuC and LeuD.

It catalyses the reaction (2R,3S)-3-isopropylmalate = (2S)-2-isopropylmalate. It participates in amino-acid biosynthesis; L-leucine biosynthesis; L-leucine from 3-methyl-2-oxobutanoate: step 2/4. Catalyzes the isomerization between 2-isopropylmalate and 3-isopropylmalate, via the formation of 2-isopropylmaleate. The chain is 3-isopropylmalate dehydratase small subunit from Bacillus velezensis (strain DSM 23117 / BGSC 10A6 / LMG 26770 / FZB42) (Bacillus amyloliquefaciens subsp. plantarum).